Reading from the N-terminus, the 901-residue chain is HTH-type transcriptional regulator MalT (901 aa).

ATP is bound at residue 39-46 (SPAGYGKT). Residues 829-894 (ELIRTSPLTQ…AAVQHAQKLL (66 aa)) form the HTH luxR-type domain. A DNA-binding region (H-T-H motif) is located at residues 853-872 (NEQIAGELEVAATTIKTHIR).

The protein belongs to the MalT family. In terms of assembly, monomer in solution. Oligomerizes to an active state in the presence of the positive effectors ATP and maltotriose.

With respect to regulation, activated by ATP and maltotriose, which are both required for DNA binding. Functionally, positively regulates the transcription of the maltose regulon whose gene products are responsible for uptake and catabolism of malto-oligosaccharides. Specifically binds to the promoter region of its target genes, recognizing a short DNA motif called the MalT box. This chain is HTH-type transcriptional regulator MalT, found in Shigella flexneri serotype 5b (strain 8401).